A 173-amino-acid chain; its full sequence is Transcription factor S-II-related protein (173 aa).

Positions 9–129 (ISDKEREIVI…EETLNQMATV (121 aa)) constitute a TFIIS central domain. Residues 130-170 (EWKPCYACKNTSYHFYQLQTRSADEPMTTFYICKNCMKTYK) form a TFIIS-type zinc finger. Zn(2+) contacts are provided by Cys134, Cys137, Cys162, and Cys165.

This sequence belongs to the TFS-II family.

The protein is Transcription factor S-II-related protein of Acanthamoeba polyphaga mimivirus (APMV).